We begin with the raw amino-acid sequence, 145 residues long: DNA polymerase epsilon subunit 3 (145 aa).

Residue Ala2 is modified to N-acetylalanine. Thr83 is modified (phosphothreonine). Residues 85 to 144 (LKEALEAYRREQKGKKEASEQKKKDKDKKDCEEQDKSREEEDEDEERLDEEEQNEEEEVD) are a coiled coil. Basic and acidic residues predominate over residues 93-123 (RREQKGKKEASEQKKKDKDKKDCEEQDKSRE). The segment at 93-145 (RREQKGKKEASEQKKKDKDKKDCEEQDKSREEEDEDEERLDEEEQNEEEEVDN) is disordered. Ser121 is subject to Phosphoserine. The span at 124-145 (EEDEDEERLDEEEQNEEEEVDN) shows a compositional bias: acidic residues.

As to quaternary structure, component of the DNA polymerase epsilon complex consisting of four subunits: the catalytic subunit POLE and the accessory subunits POLE2, POLE3 and POLE4. Interaction with POLE4 is a prerequisite for further binding with POLE and POLE2. Heterodimer with CHRAC1; binds to DNA. Component of the CHRAC ISWI chromatin remodeling complex at least composed of SMARCA5/SNF2H, BAZ1A/ACF1, CHRAC1 and POLE3; the complex preferentially binds DNA through the CHRAC1-POLE3 heterodimer and possesses ATP-dependent nucleosome-remodeling activity. Within the complex, the heterodimer with CHRAC1 interacts with SMARCA5/SNF2H; the interaction is direct and enhances nucleosome sliding activity by the SMARCA5/SNF2H and BAZ1A/ACF1 interaction. Within the complex, the heterodimer with CHRAC1 interacts with BAZ1A/ACF1; the interactions are direct.

The protein resides in the nucleus. Its function is as follows. Accessory component of the DNA polymerase epsilon complex. Participates in DNA repair and in chromosomal DNA replication. Forms a complex with CHRAC1 and binds naked DNA, which is then incorporated into chromatin, aided by the nucleosome-remodeling activity of ISWI/SNF2H and ACF1. Does not enhance nucleosome sliding activity of the ACF-5 ISWI chromatin remodeling complex. The polypeptide is DNA polymerase epsilon subunit 3 (Pole3) (Rattus norvegicus (Rat)).